The sequence spans 185 residues: Ribosome-recycling factor (185 aa).

The protein belongs to the RRF family.

The protein localises to the cytoplasm. Functionally, responsible for the release of ribosomes from messenger RNA at the termination of protein biosynthesis. May increase the efficiency of translation by recycling ribosomes from one round of translation to another. This chain is Ribosome-recycling factor, found in Streptococcus mutans serotype c (strain ATCC 700610 / UA159).